Reading from the N-terminus, the 84-residue chain is Small ribosomal subunit protein bS18A (84 aa).

Belongs to the bacterial ribosomal protein bS18 family. In terms of assembly, part of the 30S ribosomal subunit. Forms a tight heterodimer with protein bS6.

Binds as a heterodimer with protein bS6 to the central domain of the 16S rRNA, where it helps stabilize the platform of the 30S subunit. This chain is Small ribosomal subunit protein bS18A, found in Mycobacterium marinum (strain ATCC BAA-535 / M).